Consider the following 462-residue polypeptide: Glycine--tRNA ligase (462 aa).

Residues R101 and E164 each contribute to the substrate site. ATP is bound by residues 196–198 (RNE), 206–211 (FRTREF), 283–284 (EL), and 327–330 (GVDR). 211–215 (FEQME) is a substrate binding site. Substrate is bound at residue 323 to 327 (EPSAG).

Belongs to the class-II aminoacyl-tRNA synthetase family. In terms of assembly, homodimer.

It localises to the cytoplasm. It carries out the reaction tRNA(Gly) + glycine + ATP = glycyl-tRNA(Gly) + AMP + diphosphate. Catalyzes the attachment of glycine to tRNA(Gly). The polypeptide is Glycine--tRNA ligase (Thermobifida fusca (strain YX)).